We begin with the raw amino-acid sequence, 1205 residues long: cGMP-specific 3',5'-cyclic phosphodiesterase (1205 aa).

Residues 1-153 form a disordered region; the sequence is MTDVSSPAGG…TKASTTASQQ (153 aa). The segment covering 18–32 has biased composition (low complexity); it reads TTSSSPAATTSASSS. The span at 33–48 shows a compositional bias: polar residues; sequence KPLTNGANKTTISTTA. Low complexity predominate over residues 62-71; the sequence is GAIPASSSSG. The segment covering 83–94 has biased composition (polar residues); it reads SNNNRPAATNRS. The segment covering 118–140 has biased composition (low complexity); that stretch reads SSSSPSQSPSQTQASIQTQTSQQ. GAF domains are found at residues 259 to 411 and 443 to 624; these read DIDV…GIGI and NLEC…GLGI. The PDEase domain occupies 654-1052; the sequence is SQDQTEKLTQ…RNWQDLAEKV (399 aa). H730 acts as the Proton donor in catalysis. Positions 734, 770, 771, and 956 each coordinate a divalent metal cation. Disordered stretches follow at residues 1093 to 1122 and 1152 to 1205; these read QQSQ…TGAL and SHVS…CALL. Composition is skewed to basic and acidic residues over residues 1098-1109 and 1152-1162; these read GSEDSHTPEHQR and SHVSEDMDDKS. Over residues 1171-1191 the composition is skewed to low complexity; that stretch reads ASGSMGRMSASSSTSSAGGQM. The span at 1195–1205 shows a compositional bias: basic residues; that stretch reads SKKRSKLCALL. At C1202 the chain carries Cysteine methyl ester. C1202 is lipidated: S-farnesyl cysteine. The propeptide at 1203–1205 is removed in mature form; that stretch reads ALL.

It belongs to the cyclic nucleotide phosphodiesterase family. In terms of assembly, interacts with PrBP. It depends on a divalent metal cation as a cofactor.

Its subcellular location is the cell membrane. The enzyme catalyses 3',5'-cyclic GMP + H2O = GMP + H(+). Functionally, has a role regulating cGMP transport in Malpighian tubule principal cells. In Drosophila sechellia (Fruit fly), this protein is cGMP-specific 3',5'-cyclic phosphodiesterase.